Consider the following 285-residue polypeptide: Probable enoyl-CoA hydratase echA12 (285 aa).

Belongs to the enoyl-CoA hydratase/isomerase family.

The enzyme catalyses a (3S)-3-hydroxyacyl-CoA = a (2E)-enoyl-CoA + H2O. It carries out the reaction a 4-saturated-(3S)-3-hydroxyacyl-CoA = a (3E)-enoyl-CoA + H2O. Its function is as follows. Could possibly oxidize fatty acids using specific components. The chain is Probable enoyl-CoA hydratase echA12 (echA12) from Mycobacterium bovis (strain ATCC BAA-935 / AF2122/97).